We begin with the raw amino-acid sequence, 140 residues long: Natriuretic peptides A (140 aa).

An N-terminal signal peptide occupies residues 1 to 24 (MDTRGSFSCGFLLLLLIQLQPSRA). The propeptide occupies 25–111 (NPIYNLSPAK…KRLRGVQMPR (87 aa)). Residues 55-94 (ALESNPDLQEPQTQEEIPPELTDDSDEQKAEPKLASNTPL) are disordered. Residues 71–80 (IPPELTDDSD) are compositionally biased toward acidic residues. An intrachain disulfide couples C118 to C134.

The protein belongs to the natriuretic peptide family. In terms of processing, cleaved by CORIN upon secretion to produce the functional hormone.

It localises to the secreted. Functionally, hormone playing a key role in cardiovascular homeostasis through regulation of natriuresis, diuresis, and vasodilation. Specifically binds and stimulates the cGMP production of the NPR1 receptor. Binds the clearance receptor NPR3. The chain is Natriuretic peptides A (NPPA) from Gallus gallus (Chicken).